The sequence spans 423 residues: D-tagatose-1,6-bisphosphate aldolase subunit GatZ (423 aa).

Belongs to the GatZ/KbaZ family. GatZ subfamily. Forms a complex with GatY.

It participates in carbohydrate metabolism; D-tagatose 6-phosphate degradation; D-glyceraldehyde 3-phosphate and glycerone phosphate from D-tagatose 6-phosphate: step 2/2. Component of the tagatose-1,6-bisphosphate aldolase GatYZ that is required for full activity and stability of the Y subunit. Could have a chaperone-like function for the proper and stable folding of GatY. When expressed alone, GatZ does not show any aldolase activity. Is involved in the catabolism of galactitol. The polypeptide is D-tagatose-1,6-bisphosphate aldolase subunit GatZ (Salmonella typhimurium (strain LT2 / SGSC1412 / ATCC 700720)).